Consider the following 220-residue polypeptide: MAENQKIQQIDCTKVPEPTLRRLPWYLSNVKLLKQRGERFVSSTQISKEINIDASQIAKDLSYVNISGRTRVGYEVDALIEVLEHFLGFTEIHKAFLFGVGSLGGALLQDSGLKHFGLEIVAAFDVDPTLVGTNLNGIPIYHSDDFLKKMEEYDVQIGVLTVPIEIAQCITDMMVDGGIKAVWNFTPFRIRVPEDIVVQNTSLYAHLAVMFNRLNFNEIK.

A DNA-binding region (H-T-H motif) is located at residues 25-64 (WYLSNVKLLKQRGERFVSSTQISKEINIDASQIAKDLSYV). 99–104 (GVGSLG) is a binding site for NAD(+).

The protein belongs to the transcriptional regulatory Rex family. Homodimer.

The protein localises to the cytoplasm. Its function is as follows. Modulates transcription in response to changes in cellular NADH/NAD(+) redox state. The protein is Redox-sensing transcriptional repressor Rex of Bacteroides thetaiotaomicron (strain ATCC 29148 / DSM 2079 / JCM 5827 / CCUG 10774 / NCTC 10582 / VPI-5482 / E50).